The primary structure comprises 204 residues: Putative AgrB-like protein (204 aa).

The next 4 membrane-spanning stretches (helical) occupy residues 52–74, 87–107, 111–131, and 156–176; these read YGIALVTGLLLQTVTVHLSYLWL, LNCTLISLMMFVLAPFVFQNI, NWIVLGTFGFILLNMFLFAPA, and LILTGIALLIPFAEMKTLIMV.

The protein belongs to the AgrB family.

It localises to the cell membrane. Functionally, may be involved in the proteolytic processing of a quorum sensing system signal molecule precursor. In Listeria monocytogenes serotype 4b (strain CLIP80459), this protein is Putative AgrB-like protein.